Here is a 94-residue protein sequence, read N- to C-terminus: MKFSGLILGALALVSGAIAVDIQKSVIITYKENTPDSVIQQDKKAILDDGGVITHEYTLMKGFSAKVNAKTLESVSASSESYATIEEDKVVSTL.

A signal peptide spans 1-19; that stretch reads MKFSGLILGALALVSGAIA.

It belongs to the protease inhibitor I9 family.

This is an uncharacterized protein from Neurospora crassa (strain ATCC 24698 / 74-OR23-1A / CBS 708.71 / DSM 1257 / FGSC 987).